A 221-amino-acid polypeptide reads, in one-letter code: MLFKNSKWIGSFSRRSRLKPDVDEILEKYSIQNSKESIEKIVNSQKRIWVEIGFGNGENMLYQVLNEPDLLFIGCEPYLKGVSRLLTNIEIQNIKNILMWTEDARELIANFPDNSVERFFILFPDPWPKRSHNKRRLINTEFLNLLAKKILITGEIFIATDHQDYAEWIASHIKQCNSLIYREDDFTSYTLTKYHRRALKDQRKVRFFKVSVINNLQTMDQ.

Glu-51, Glu-76, Asp-103, and Asp-125 together coordinate S-adenosyl-L-methionine. Residue Asp-125 is part of the active site. The substrate site is built by Lys-129 and Asp-161.

It belongs to the class I-like SAM-binding methyltransferase superfamily. TrmB family.

The enzyme catalyses guanosine(46) in tRNA + S-adenosyl-L-methionine = N(7)-methylguanosine(46) in tRNA + S-adenosyl-L-homocysteine. It participates in tRNA modification; N(7)-methylguanine-tRNA biosynthesis. In terms of biological role, catalyzes the formation of N(7)-methylguanine at position 46 (m7G46) in tRNA. The polypeptide is tRNA (guanine-N(7)-)-methyltransferase (Wolbachia pipientis wMel).